The following is a 332-amino-acid chain: Ribosomal RNA-processing protein 8 (332 aa).

A disordered region spans residues 1 to 109 (MGKKRINEVS…EVEKKNEEGD (109 aa)). Composition is skewed to basic residues over residues 38–53 (KKKK…KLAA) and 82–94 (KKKK…KKKY). Positions 95–109 (KPEAAEVEKKNEEGD) are enriched in basic and acidic residues. The S-adenosyl-L-methionine site is built by H158, G193, D213, D225, M226, and C242.

Belongs to the methyltransferase superfamily. RRP8 family.

It localises to the nucleus. The protein localises to the nucleolus. Its function is as follows. Probable methyltransferase required to silence rDNA. The protein is Ribosomal RNA-processing protein 8 (rrp-8) of Caenorhabditis briggsae.